Consider the following 1092-residue polypeptide: Probable cellulose synthase A catalytic subunit 5 [UDP-forming] (1092 aa).

The Cytoplasmic portion of the chain corresponds to Met1–Met279. Zn(2+)-binding residues include Cys39, Cys42, Cys58, Cys61, Cys66, Cys69, Cys81, and Cys84. An RING-type; degenerate zinc finger spans residues Cys39–Lys85. The chain crosses the membrane as a helical span at residues Ile280 to Val300. Residues Pro301–Asp302 lie on the Extracellular side of the membrane. Residues Ala303–Leu323 traverse the membrane as a helical segment. Residues Asp324–Ser868 lie on the Cytoplasmic side of the membrane. UDP-alpha-D-glucose is bound by residues Ser362, Lys368, Glu369, and Asp398. The active site involves Asp398. Positions Asn450 to Val479 form a coiled coil. Lys539 lines the UDP-alpha-D-glucose pocket. Mn(2+) contacts are provided by Lys540 and Asp564. Residue Asp792 is part of the active site. The chain crosses the membrane as a helical span at residues Ile869 to Leu889. The Extracellular segment spans residues Leu890–Asn901. A helical transmembrane segment spans residues Ile902–Met922. Topologically, residues Arg923–Phe938 are cytoplasmic. A helical membrane pass occupies residues Trp939–Ile959. Residues Ala960–Thr987 lie on the Extracellular side of the membrane. Residues Thr988 to Val1008 traverse the membrane as a helical segment. The Cytoplasmic portion of the chain corresponds to Ser1009–Trp1019. The chain crosses the membrane as a helical span at residues Gly1020–Leu1040. Residues Lys1041–Arg1049 lie on the Extracellular side of the membrane. The helical transmembrane segment at Thr1050–Val1070 threads the bilayer. At Arg1071 to Asn1092 the chain is on the cytoplasmic side.

This sequence belongs to the glycosyltransferase 2 family. Plant cellulose synthase subfamily. The cofactor is Mn(2+). Zn(2+) is required as a cofactor.

It localises to the cell membrane. The catalysed reaction is [(1-&gt;4)-beta-D-glucosyl](n) + UDP-alpha-D-glucose = [(1-&gt;4)-beta-D-glucosyl](n+1) + UDP + H(+). It participates in glycan metabolism; plant cellulose biosynthesis. Its function is as follows. Probable catalytic subunit of cellulose synthase terminal complexes ('rosettes'), required for beta-1,4-glucan microfibril crystallization, a major mechanism of the cell wall formation. This is Probable cellulose synthase A catalytic subunit 5 [UDP-forming] (CESA5) from Oryza sativa subsp. indica (Rice).